Here is a 402-residue protein sequence, read N- to C-terminus: Ferredoxin--NADP reductase (402 aa).

The 57-residue stretch at 18–74 folds into the CpcD-like domain; it reads NRLFIYEVVGLGGDGRNENSLVRKSGTTFITVPYARMNQEMQRITKLGGKIVSIRPA. Residues 80–101 form a disordered region; it reads IVSEGQSSAQASAQSPMASSTK. The segment covering 85 to 99 has biased composition (low complexity); that stretch reads QSSAQASAQSPMASS. Residues 120–245 form the FAD-binding FR-type domain; sequence KTPFLGKCIE…TGPVGKEMLL (126 aa). FAD is bound by residues 179–182, 200–202, tyrosine 206, 218–220, and threonine 260; these read RLYS, CVR, and VCS. Positions 182 and 202 each coordinate NADP(+). Residues threonine 260, 292–293, 322–323, lysine 332, 332–336, 361–362, and glutamate 400 contribute to the NADP(+) site; these read VP, SR, KVYVQ, and GL.

This sequence belongs to the ferredoxin--NADP reductase type 1 family. The cofactor is FAD.

It is found in the cellular thylakoid membrane. It carries out the reaction 2 reduced [2Fe-2S]-[ferredoxin] + NADP(+) + H(+) = 2 oxidized [2Fe-2S]-[ferredoxin] + NADPH. The protein is Ferredoxin--NADP reductase (petH) of Picosynechococcus sp. (strain ATCC 27264 / PCC 7002 / PR-6) (Agmenellum quadruplicatum).